The chain runs to 127 residues: Fluoride-specific ion channel FluC 1 (127 aa).

4 consecutive transmembrane segments (helical) span residues 4–24 (TLLA…LVSL), 35–55 (VGTL…LALF), 71–91 (TGFC…VYLI), and 101–121 (GTIL…FILV). Na(+) is bound by residues Gly75 and Thr78.

It belongs to the fluoride channel Fluc/FEX (TC 1.A.43) family.

Its subcellular location is the cell inner membrane. It carries out the reaction fluoride(in) = fluoride(out). Na(+) is not transported, but it plays an essential structural role and its presence is essential for fluoride channel function. Functionally, fluoride-specific ion channel. Important for reducing fluoride concentration in the cell, thus reducing its toxicity. The sequence is that of Fluoride-specific ion channel FluC 1 from Yersinia pseudotuberculosis serotype I (strain IP32953).